Here is a 505-residue protein sequence, read N- to C-terminus: Deoxyguanosinetriphosphate triphosphohydrolase (505 aa).

Residues R66–C273 enclose the HD domain.

It belongs to the dGTPase family. Type 1 subfamily. In terms of assembly, homotetramer. Requires Mg(2+) as cofactor.

It catalyses the reaction dGTP + H2O = 2'-deoxyguanosine + triphosphate + H(+). Its function is as follows. dGTPase preferentially hydrolyzes dGTP over the other canonical NTPs. The sequence is that of Deoxyguanosinetriphosphate triphosphohydrolase from Escherichia coli O7:K1 (strain IAI39 / ExPEC).